The following is a 364-amino-acid chain: GDSL esterase/lipase 7 (364 aa).

An N-terminal signal peptide occupies residues 1–19 (MKSLLICLVLLELVWLGNG). Ser37 serves as the catalytic Nucleophile. 3 N-linked (GlcNAc...) asparagine glycosylation sites follow: Asn236, Asn237, and Asn264. Catalysis depends on residues Asp329 and His332. N-linked (GlcNAc...) asparagine glycosylation occurs at Asn351.

This sequence belongs to the 'GDSL' lipolytic enzyme family.

Its subcellular location is the secreted. This is GDSL esterase/lipase 7 (GLIP7) from Arabidopsis thaliana (Mouse-ear cress).